A 255-amino-acid polypeptide reads, in one-letter code: uncharacterized protein (255 aa).

Residues M1–G23 form the signal peptide. Residue C24 is the site of N-palmitoyl cysteine attachment. A lipid anchor (S-diacylglycerol cysteine) is attached at C24.

This sequence belongs to the staphylococcal tandem lipoprotein family.

Its subcellular location is the cell membrane. This is an uncharacterized protein from Staphylococcus aureus (strain USA300).